A 434-amino-acid polypeptide reads, in one-letter code: A-adding tRNA nucleotidyltransferase (434 aa).

Residue Gly-20–Arg-23 coordinates ATP. The Mg(2+) site is built by Asp-33 and Asp-35. ATP is bound by residues Arg-91–Asp-92, Asn-96, Asp-132–Arg-141, and Arg-177. One can recognise an HD domain in the interval Val-227 to Met-339.

Belongs to the tRNA nucleotidyltransferase/poly(A) polymerase family. It depends on Mg(2+) as a cofactor.

The enzyme catalyses a tRNA with a 3' CC end + ATP = a tRNA with a 3' CCA end + diphosphate. Its function is as follows. tRNA nucleotidyltransferase involved in the synthesis of the tRNA CCA terminus. Adds the terminal adenosine residue to tRNA. The protein is A-adding tRNA nucleotidyltransferase of Deinococcus radiodurans (strain ATCC 13939 / DSM 20539 / JCM 16871 / CCUG 27074 / LMG 4051 / NBRC 15346 / NCIMB 9279 / VKM B-1422 / R1).